The primary structure comprises 244 residues: Ubiquinone/menaquinone biosynthesis C-methyltransferase UbiE (244 aa).

S-adenosyl-L-methionine contacts are provided by residues Thr70, Asp91, and 117 to 118 (DA).

This sequence belongs to the class I-like SAM-binding methyltransferase superfamily. MenG/UbiE family.

The catalysed reaction is a 2-demethylmenaquinol + S-adenosyl-L-methionine = a menaquinol + S-adenosyl-L-homocysteine + H(+). The enzyme catalyses a 2-methoxy-6-(all-trans-polyprenyl)benzene-1,4-diol + S-adenosyl-L-methionine = a 5-methoxy-2-methyl-3-(all-trans-polyprenyl)benzene-1,4-diol + S-adenosyl-L-homocysteine + H(+). Its pathway is quinol/quinone metabolism; menaquinone biosynthesis; menaquinol from 1,4-dihydroxy-2-naphthoate: step 2/2. The protein operates within cofactor biosynthesis; ubiquinone biosynthesis. Its function is as follows. Methyltransferase required for the conversion of demethylmenaquinol (DMKH2) to menaquinol (MKH2) and the conversion of 2-polyprenyl-6-methoxy-1,4-benzoquinol (DDMQH2) to 2-polyprenyl-3-methyl-6-methoxy-1,4-benzoquinol (DMQH2). The sequence is that of Ubiquinone/menaquinone biosynthesis C-methyltransferase UbiE from Laribacter hongkongensis (strain HLHK9).